Reading from the N-terminus, the 1483-residue chain is Chromosome partition protein MukB (1483 aa).

34–41 contacts ATP; sequence GGNGAGKS. Coiled-coil stretches lie at residues 326-418, 444-480, 509-601, 780-804, 837-923, 977-1115, and 1209-1265; these read LEAD…QYNQ, LETFQAKELEATEKMLSLEQKMSMAQTAHSQFEQAYQ, RHLA…MQRA, RAACESRIESLHAEREVLSERFATL, EIRQ…AKLE, EMLS…TAKA, and VEAI…LQNV. The segment at 666-783 is flexible hinge; that stretch reads PGGSEDQRLN…EVPLFGRAAC (118 aa).

Belongs to the SMC family. MukB subfamily. Homodimerization via its hinge domain. Binds to DNA via its C-terminal region. Interacts, and probably forms a ternary complex, with MukE and MukF via its C-terminal region. The complex formation is stimulated by calcium or magnesium. Interacts with tubulin-related protein FtsZ.

It is found in the cytoplasm. Its subcellular location is the nucleoid. Functionally, plays a central role in chromosome condensation, segregation and cell cycle progression. Functions as a homodimer, which is essential for chromosome partition. Involved in negative DNA supercoiling in vivo, and by this means organize and compact chromosomes. May achieve or facilitate chromosome segregation by condensation DNA from both sides of a centrally located replisome during cell division. The chain is Chromosome partition protein MukB from Shigella dysenteriae serotype 1 (strain Sd197).